The primary structure comprises 411 residues: Multidrug resistance protein MdtA (411 aa).

Positions 1–26 are cleaved as a signal peptide; sequence MNNNKKTKKRFSLIIILLIVIAGAIA. A compositionally biased stretch (polar residues) spans 35–55; the sequence is SAPPVSKDTPTANTPNRSTAG. Residues 35-64 form a disordered region; that stretch reads SAPPVSKDTPTANTPNRSTAGSRRPPMPPV.

This sequence belongs to the membrane fusion protein (MFP) (TC 8.A.1) family. Part of a tripartite efflux system composed of MdtA, MdtB and MdtC.

The protein localises to the cell inner membrane. The protein is Multidrug resistance protein MdtA of Proteus mirabilis (strain HI4320).